Here is a 268-residue protein sequence, read N- to C-terminus: Ubiquinone/menaquinone biosynthesis C-methyltransferase UbiE (268 aa).

The segment at 1 to 23 (MTDQHAFATEQVQLDPTLSPTTE) is disordered. The segment covering 10-23 (EQVQLDPTLSPTTE) has biased composition (polar residues). Residues T91, D112, 140–141 (NA), and S157 contribute to the S-adenosyl-L-methionine site.

Belongs to the class I-like SAM-binding methyltransferase superfamily. MenG/UbiE family.

The catalysed reaction is a 2-demethylmenaquinol + S-adenosyl-L-methionine = a menaquinol + S-adenosyl-L-homocysteine + H(+). The enzyme catalyses a 2-methoxy-6-(all-trans-polyprenyl)benzene-1,4-diol + S-adenosyl-L-methionine = a 5-methoxy-2-methyl-3-(all-trans-polyprenyl)benzene-1,4-diol + S-adenosyl-L-homocysteine + H(+). Its pathway is quinol/quinone metabolism; menaquinone biosynthesis; menaquinol from 1,4-dihydroxy-2-naphthoate: step 2/2. It functions in the pathway cofactor biosynthesis; ubiquinone biosynthesis. Its function is as follows. Methyltransferase required for the conversion of demethylmenaquinol (DMKH2) to menaquinol (MKH2) and the conversion of 2-polyprenyl-6-methoxy-1,4-benzoquinol (DDMQH2) to 2-polyprenyl-3-methyl-6-methoxy-1,4-benzoquinol (DMQH2). This Pasteurella multocida (strain Pm70) protein is Ubiquinone/menaquinone biosynthesis C-methyltransferase UbiE.